The primary structure comprises 399 residues: MSKTIAINAGSSSLKWQLYQMPEEKVLAQGIIERIGLTDSISTVKYDGKKEEHILDIPDHTEAVKRLLNDLIHFGIIGTYDEITGVGHRIVAGGEYFKESVVVDDKVVEQVEELAALAPLHNPGAAAGIRAFRKILPDITSVCVFDTSFHTTMQKHTYLYPIPQKYYTDYKVRKYGAHGTSHKYVAEEAAKMLGRPLDELKLITAHVGNGVSITANYHGQSVDTSMGFTPLAGPMMGTRSGDIDPAIIPYLIAQDPELKDAADVVNMLNKQSGLGGVSGISSDMRDIEAGLQANNPDAVLAYNIFIDRIKKFIGQYFAVLNGADALVFTAGMGENAPLMRQDVVNGLSWFGMEIDPEKNVFGYRGDISTAASKVKVLVVSTDEELCIARDVERLKQTIS.

N8 serves as a coordination point for Mg(2+). Residue K15 participates in ATP binding. R89 is a substrate binding site. The Proton donor/acceptor role is filled by D146. ATP-binding positions include 206 to 210 (HVGNG), 283 to 285 (DMR), and 331 to 335 (GMGEN). E383 contributes to the Mg(2+) binding site.

The protein belongs to the acetokinase family. As to quaternary structure, homodimer. Mg(2+) is required as a cofactor. It depends on Mn(2+) as a cofactor.

It is found in the cytoplasm. The enzyme catalyses acetate + ATP = acetyl phosphate + ADP. Its pathway is metabolic intermediate biosynthesis; acetyl-CoA biosynthesis; acetyl-CoA from acetate: step 1/2. Catalyzes the formation of acetyl phosphate from acetate and ATP. Can also catalyze the reverse reaction. The protein is Acetate kinase of Streptococcus equi subsp. zooepidemicus (strain H70).